The primary structure comprises 35 residues: Sperm-specific protein Phi-1 (35 aa).

Basic residues-rich tracts occupy residues 1-17 (PSPT…RSRS) and 25-35 (AAKRAKSKTAK). The tract at residues 1 to 35 (PSPTRRSKSRSKSRSRSRSASAGKAAKRAKSKTAK) is disordered.

In terms of tissue distribution, sperm.

Its subcellular location is the nucleus. It localises to the chromosome. Its function is as follows. Involved in nuclear basic protein transition: histones are replaced by spermatid specific proteins which are themselves replaced by protamines in late spermatids. The chain is Sperm-specific protein Phi-1 from Mytilus californianus (California mussel).